Consider the following 148-residue polypeptide: Nucleoside diphosphate kinase (148 aa).

Residues lysine 9, phenylalanine 57, arginine 85, threonine 91, arginine 102, and asparagine 112 each contribute to the ATP site. At threonine 91 the chain carries Phosphothreonine. Catalysis depends on histidine 115, which acts as the Pros-phosphohistidine intermediate. Position 122 is a phosphoserine (serine 122).

This sequence belongs to the NDK family. In terms of assembly, homotetramer. Mg(2+) serves as cofactor.

It is found in the cytoplasm. It carries out the reaction a 2'-deoxyribonucleoside 5'-diphosphate + ATP = a 2'-deoxyribonucleoside 5'-triphosphate + ADP. The catalysed reaction is a ribonucleoside 5'-diphosphate + ATP = a ribonucleoside 5'-triphosphate + ADP. Its function is as follows. Major role in the synthesis of nucleoside triphosphates other than ATP. The ATP gamma phosphate is transferred to the NDP beta phosphate via a ping-pong mechanism, using a phosphorylated active-site intermediate. The sequence is that of Nucleoside diphosphate kinase from Bacillus anthracis.